Reading from the N-terminus, the 178-residue chain is Large ribosomal subunit protein uL6 (178 aa).

The protein belongs to the universal ribosomal protein uL6 family. In terms of assembly, part of the 50S ribosomal subunit.

This protein binds to the 23S rRNA, and is important in its secondary structure. It is located near the subunit interface in the base of the L7/L12 stalk, and near the tRNA binding site of the peptidyltransferase center. The polypeptide is Large ribosomal subunit protein uL6 (Streptococcus gordonii (strain Challis / ATCC 35105 / BCRC 15272 / CH1 / DL1 / V288)).